Consider the following 326-residue polypeptide: Ribonuclease H2 subunit A (326 aa).

The interval 1–47 (MKDDHDAWEPEELVSDNNSSENELQEDQNSSITFLPPSVNKSNPAKS) is disordered. Polar residues predominate over residues 15-47 (SDNNSSENELQEDQNSSITFLPPSVNKSNPAKS). The RNase H type-2 domain maps to 63 to 286 (PYRLGVDEAG…AKDLLELPSK (224 aa)). Residues D69, E70, and D180 each contribute to the a divalent metal cation site.

It belongs to the RNase HII family. Eukaryotic subfamily. The cofactor is Mn(2+). Requires Mg(2+) as cofactor.

It catalyses the reaction Endonucleolytic cleavage to 5'-phosphomonoester.. Its function is as follows. Endonuclease that specifically degrades the RNA of RNA-DNA hybrids. Participates in DNA replication. The chain is Ribonuclease H2 subunit A (rnh201) from Schizosaccharomyces pombe (strain 972 / ATCC 24843) (Fission yeast).